The following is a 175-amino-acid chain: Ribonuclease M5 (175 aa).

The region spanning 3–83 (NEIIIVEGKS…DVDVFNAFVS (81 aa)) is the Toprim domain. The Mg(2+) site is built by glutamate 9, aspartate 57, and aspartate 59.

Belongs to the ribonuclease M5 family. The cofactor is Mg(2+).

The protein localises to the cytoplasm. It catalyses the reaction Endonucleolytic cleavage of RNA, removing 21 and 42 nucleotides, respectively, from the 5'- and 3'-termini of a 5S-rRNA precursor.. In terms of biological role, required for correct processing of both the 5' and 3' ends of 5S rRNA precursor. Cleaves both sides of a double-stranded region yielding mature 5S rRNA in one step. The sequence is that of Ribonuclease M5 from Mesoplasma florum (strain ATCC 33453 / NBRC 100688 / NCTC 11704 / L1) (Acholeplasma florum).